A 172-amino-acid chain; its full sequence is Large ribosomal subunit protein uL5 (172 aa).

This sequence belongs to the universal ribosomal protein uL5 family. As to quaternary structure, part of the 50S ribosomal subunit; contacts the 5S rRNA and probably tRNA. Forms a bridge to the 30S subunit in the 70S ribosome.

Its function is as follows. This is one of the proteins that bind and probably mediate the attachment of the 5S RNA into the large ribosomal subunit, where it forms part of the central protuberance. In the 70S ribosome it contacts protein S13 of the 30S subunit (bridge B1b), connecting the 2 subunits; this bridge is implicated in subunit movement. May contact the P site tRNA; the 5S rRNA and some of its associated proteins might help stabilize positioning of ribosome-bound tRNAs. This chain is Large ribosomal subunit protein uL5, found in Haloferax mediterranei (strain ATCC 33500 / DSM 1411 / JCM 8866 / NBRC 14739 / NCIMB 2177 / R-4) (Halobacterium mediterranei).